Reading from the N-terminus, the 89-residue chain is MWNVTIKAAPPYDFDRVLERLSLDPLNKVDVHKRTVLVPLYSEKEEPFVAVVKAIGSKENPIFEISGEQDEQKERAIHELTRIFQWKNS.

This is an uncharacterized protein from Geobacillus stearothermophilus (Bacillus stearothermophilus).